We begin with the raw amino-acid sequence, 360 residues long: Phenylalanine--tRNA ligase alpha subunit (360 aa).

E260 contacts Mg(2+).

It belongs to the class-II aminoacyl-tRNA synthetase family. Phe-tRNA synthetase alpha subunit type 1 subfamily. As to quaternary structure, tetramer of two alpha and two beta subunits. Mg(2+) is required as a cofactor.

The protein localises to the cytoplasm. The catalysed reaction is tRNA(Phe) + L-phenylalanine + ATP = L-phenylalanyl-tRNA(Phe) + AMP + diphosphate + H(+). The polypeptide is Phenylalanine--tRNA ligase alpha subunit (Afipia carboxidovorans (strain ATCC 49405 / DSM 1227 / KCTC 32145 / OM5) (Oligotropha carboxidovorans)).